The sequence spans 249 residues: tRNA (guanine-N(1)-)-methyltransferase (249 aa).

S-adenosyl-L-methionine is bound by residues G121 and 141-146 (LGDFVL).

Belongs to the RNA methyltransferase TrmD family. As to quaternary structure, homodimer.

Its subcellular location is the cytoplasm. The catalysed reaction is guanosine(37) in tRNA + S-adenosyl-L-methionine = N(1)-methylguanosine(37) in tRNA + S-adenosyl-L-homocysteine + H(+). Functionally, specifically methylates guanosine-37 in various tRNAs. This chain is tRNA (guanine-N(1)-)-methyltransferase, found in Cereibacter sphaeroides (strain KD131 / KCTC 12085) (Rhodobacter sphaeroides).